We begin with the raw amino-acid sequence, 294 residues long: Elongation factor Ts (294 aa).

An involved in Mg(2+) ion dislocation from EF-Tu region spans residues 79-82 (TDFV).

Belongs to the EF-Ts family.

The protein resides in the cytoplasm. Functionally, associates with the EF-Tu.GDP complex and induces the exchange of GDP to GTP. It remains bound to the aminoacyl-tRNA.EF-Tu.GTP complex up to the GTP hydrolysis stage on the ribosome. This Geobacillus thermodenitrificans (strain NG80-2) protein is Elongation factor Ts.